A 235-amino-acid polypeptide reads, in one-letter code: Carboxy-S-adenosyl-L-methionine synthase (235 aa).

Residues Tyr35, 60-62, 83-84, Asn124, and Arg191 contribute to the S-adenosyl-L-methionine site; these read GCS and DN.

The protein belongs to the class I-like SAM-binding methyltransferase superfamily. Cx-SAM synthase family. Homodimer.

It carries out the reaction prephenate + S-adenosyl-L-methionine = carboxy-S-adenosyl-L-methionine + 3-phenylpyruvate + H2O. Functionally, catalyzes the conversion of S-adenosyl-L-methionine (SAM) to carboxy-S-adenosyl-L-methionine (Cx-SAM). The sequence is that of Carboxy-S-adenosyl-L-methionine synthase from Campylobacter jejuni subsp. doylei (strain ATCC BAA-1458 / RM4099 / 269.97).